A 534-amino-acid polypeptide reads, in one-letter code: CTP synthase (534 aa).

Residues 1-267 (MTKYIFVTGG…DQIVCDHLKL (267 aa)) form an amidoligase domain region. S13 contacts CTP. S13 provides a ligand contact to UTP. 14–19 (SIGKGI) provides a ligand contact to ATP. Y54 lines the L-glutamine pocket. D71 contacts ATP. Mg(2+) contacts are provided by D71 and E141. CTP-binding positions include 148-150 (DIE), 188-193 (KTKPTQ), and K224. Residues 188 to 193 (KTKPTQ) and K224 each bind UTP. An ATP-binding site is contributed by 240-242 (RDV). The 243-residue stretch at 292–534 (KIALVGKYVE…FVTAAIKNSN (243 aa)) folds into the Glutamine amidotransferase type-1 domain. G354 contributes to the L-glutamine binding site. Catalysis depends on C381, which acts as the Nucleophile; for glutamine hydrolysis. L-glutamine-binding positions include 382–385 (LGMQ), E405, and R463. Active-site residues include H508 and E510.

It belongs to the CTP synthase family. In terms of assembly, homotetramer.

The enzyme catalyses UTP + L-glutamine + ATP + H2O = CTP + L-glutamate + ADP + phosphate + 2 H(+). It carries out the reaction L-glutamine + H2O = L-glutamate + NH4(+). It catalyses the reaction UTP + NH4(+) + ATP = CTP + ADP + phosphate + 2 H(+). It participates in pyrimidine metabolism; CTP biosynthesis via de novo pathway; CTP from UDP: step 2/2. With respect to regulation, allosterically activated by GTP, when glutamine is the substrate; GTP has no effect on the reaction when ammonia is the substrate. The allosteric effector GTP functions by stabilizing the protein conformation that binds the tetrahedral intermediate(s) formed during glutamine hydrolysis. Inhibited by the product CTP, via allosteric rather than competitive inhibition. Catalyzes the ATP-dependent amination of UTP to CTP with either L-glutamine or ammonia as the source of nitrogen. Regulates intracellular CTP levels through interactions with the four ribonucleotide triphosphates. In Streptococcus pyogenes serotype M2 (strain MGAS10270), this protein is CTP synthase.